A 1140-amino-acid chain; its full sequence is Centrosomal protein of 135 kDa (1140 aa).

The tract at residues asparagine 11–phenylalanine 64 is homodimerization. Coiled-coil stretches lie at residues asparagine 75–histidine 151 and leucine 199–threonine 416. Phosphoserine is present on residues serine 383 and serine 439. Coiled coils occupy residues leucine 447 to lysine 644, serine 668 to leucine 1036, and asparagine 1079 to glutamate 1113. Serine 688 is modified (phosphoserine). The interval methionine 1114 to valine 1140 is disordered. Residue threonine 1121 is modified to Phosphothreonine. The segment covering threonine 1121 to histidine 1133 has biased composition (low complexity). Phosphoserine is present on serine 1130.

The protein belongs to the CEP135/TSGA10 family. Homodimer. Interacts with DCTN2. Interacts with CEP250.

It is found in the cytoplasm. The protein resides in the cytoskeleton. Its subcellular location is the microtubule organizing center. The protein localises to the centrosome. It localises to the centriole. In terms of biological role, centrosomal microtubule-binding protein involved in centriole biogenesis. Acts as a scaffolding protein during early centriole biogenesis. Required for the targeting of centriole satellite proteins to centrosomes such as of PCM1, SSX2IP and CEP290 and recruitment of WRAP73 to centrioles. Also required for centriole-centriole cohesion during interphase by acting as a platform protein for CEP250 at the centriole. Required for the recruitment of CEP295 to the proximal end of new-born centrioles at the centriolar microtubule wall during early S phase in a PLK4-dependent manner. In Homo sapiens (Human), this protein is Centrosomal protein of 135 kDa.